The chain runs to 51 residues: Large ribosomal subunit protein eL39 (51 aa).

It belongs to the eukaryotic ribosomal protein eL39 family.

This Pyrococcus horikoshii (strain ATCC 700860 / DSM 12428 / JCM 9974 / NBRC 100139 / OT-3) protein is Large ribosomal subunit protein eL39 (rpl39e).